We begin with the raw amino-acid sequence, 266 residues long: Imidazole glycerol phosphate synthase subunit HisF (266 aa).

Residues Asp11 and Asp130 contribute to the active site.

It belongs to the HisA/HisF family. In terms of assembly, heterodimer of HisH and HisF.

It is found in the cytoplasm. It catalyses the reaction 5-[(5-phospho-1-deoxy-D-ribulos-1-ylimino)methylamino]-1-(5-phospho-beta-D-ribosyl)imidazole-4-carboxamide + L-glutamine = D-erythro-1-(imidazol-4-yl)glycerol 3-phosphate + 5-amino-1-(5-phospho-beta-D-ribosyl)imidazole-4-carboxamide + L-glutamate + H(+). It participates in amino-acid biosynthesis; L-histidine biosynthesis; L-histidine from 5-phospho-alpha-D-ribose 1-diphosphate: step 5/9. IGPS catalyzes the conversion of PRFAR and glutamine to IGP, AICAR and glutamate. The HisF subunit catalyzes the cyclization activity that produces IGP and AICAR from PRFAR using the ammonia provided by the HisH subunit. The chain is Imidazole glycerol phosphate synthase subunit HisF from Nitrosopumilus maritimus (strain SCM1).